Here is a 98-residue protein sequence, read N- to C-terminus: Capsid assembly scaffolding protein (98 aa).

Residues 40–62 (VSEYNDLTKSHEKLAAEKDDLIV) adopt a coiled-coil conformation.

It belongs to the phi29likevirus scaffolding protein family. As to quaternary structure, homodimer. Interacts non-specifically with DNA; probably binds DNA in the early stages of DNA packaging.

Its function is as follows. Scaffolding protein involved in the icosahedric procapsid assembly. Coassembles with the capsid proteins to form the procapsid. The scaffolding protein is found within the capsid as a serie of concentric shells. During DNA packaging, the scaffolding protein molecules are released from the procapsid. The sequence is that of Capsid assembly scaffolding protein (7) from Bacillus subtilis (Bacteriophage phi-29).